The sequence spans 122 residues: Ribosome-binding factor A (122 aa).

The protein belongs to the RbfA family. In terms of assembly, monomer. Binds 30S ribosomal subunits, but not 50S ribosomal subunits or 70S ribosomes.

The protein localises to the cytoplasm. Its function is as follows. One of several proteins that assist in the late maturation steps of the functional core of the 30S ribosomal subunit. Associates with free 30S ribosomal subunits (but not with 30S subunits that are part of 70S ribosomes or polysomes). Required for efficient processing of 16S rRNA. May interact with the 5'-terminal helix region of 16S rRNA. In Burkholderia thailandensis (strain ATCC 700388 / DSM 13276 / CCUG 48851 / CIP 106301 / E264), this protein is Ribosome-binding factor A.